A 408-amino-acid polypeptide reads, in one-letter code: Exodeoxyribonuclease 7 large subunit (408 aa).

It belongs to the XseA family. Heterooligomer composed of large and small subunits.

It is found in the cytoplasm. It catalyses the reaction Exonucleolytic cleavage in either 5'- to 3'- or 3'- to 5'-direction to yield nucleoside 5'-phosphates.. Bidirectionally degrades single-stranded DNA into large acid-insoluble oligonucleotides, which are then degraded further into small acid-soluble oligonucleotides. The protein is Exodeoxyribonuclease 7 large subunit of Alkaliphilus oremlandii (strain OhILAs) (Clostridium oremlandii (strain OhILAs)).